The following is a 135-amino-acid chain: L-ectoine synthase (135 aa).

The protein belongs to the ectoine synthase family.

The catalysed reaction is (2S)-4-acetamido-2-aminobutanoate = L-ectoine + H2O. It participates in amine and polyamine biosynthesis; ectoine biosynthesis; L-ectoine from L-aspartate 4-semialdehyde: step 3/3. Functionally, catalyzes the circularization of gamma-N-acetyl-alpha,gamma-diaminobutyric acid (ADABA) to ectoine (1,4,5,6-tetrahydro-2-methyl-4-pyrimidine carboxylic acid), which is an excellent osmoprotectant. This is L-ectoine synthase from Saccharopolyspora erythraea (strain ATCC 11635 / DSM 40517 / JCM 4748 / NBRC 13426 / NCIMB 8594 / NRRL 2338).